Here is a 161-residue protein sequence, read N- to C-terminus: MKDLLPDLCDLYPEKLQIAEPIFTSYGKRSHFYGEVVTVSCFEDNSRVRELVAENGKGKVMVIDGGGSKRRALLGDMLAEKAVDNGWEGFVINGAIRDIAAQSQLNIGIHALCAHPMPTEKRGLGDLGKTLRFAGMTIAQGDYIYCDLNGIVVSKQPLALP.

Substrate is bound by residues Gly75–Leu78 and Arg97. Asp98 is an a divalent metal cation binding site.

Belongs to the class II aldolase/RraA-like family. As to quaternary structure, homotrimer. A divalent metal cation is required as a cofactor.

It catalyses the reaction 4-hydroxy-4-methyl-2-oxoglutarate = 2 pyruvate. The catalysed reaction is oxaloacetate + H(+) = pyruvate + CO2. Catalyzes the aldol cleavage of 4-hydroxy-4-methyl-2-oxoglutarate (HMG) into 2 molecules of pyruvate. Also contains a secondary oxaloacetate (OAA) decarboxylase activity due to the common pyruvate enolate transition state formed following C-C bond cleavage in the retro-aldol and decarboxylation reactions. This chain is Putative 4-hydroxy-4-methyl-2-oxoglutarate aldolase, found in Marinomonas sp. (strain MWYL1).